A 122-amino-acid chain; its full sequence is MIQQESRLKIADNTGAKEILTIRVLGGSGRRYAGLGDVIVATVKDAIPGGNVKKGEVVKAVIVRTKKETRRPDGSYIKFDENAAVILNSNGEPRGTRIFGPVGRELRDKKFMKIISLAPEVI.

It belongs to the universal ribosomal protein uL14 family. Part of the 50S ribosomal subunit. Forms a cluster with proteins L3 and L19. In the 70S ribosome, L14 and L19 interact and together make contacts with the 16S rRNA in bridges B5 and B8.

In terms of biological role, binds to 23S rRNA. Forms part of two intersubunit bridges in the 70S ribosome. This Clavibacter michiganensis subsp. michiganensis (strain NCPPB 382) protein is Large ribosomal subunit protein uL14.